The sequence spans 83 residues: UPF0512 protein G (83 aa).

The protein belongs to the UPF0512 family.

In Dictyostelium discoideum (Social amoeba), this protein is UPF0512 protein G.